Here is a 111-residue protein sequence, read N- to C-terminus: Disintegrin piscivostatin-alpha (111 aa).

Residues M1–S20 form the signal peptide. Positions I21–K44 are excised as a propeptide. The 67-residue stretch at G45–A111 folds into the Disintegrin domain. 4 cysteine pairs are disulfide-bonded: C53-C76, C67-C73, C72-C97, and C85-C104. Positions R89–D91 match the Cell attachment site motif. Residues Y110–A111 constitute a propeptide that is removed on maturation.

The protein belongs to the disintegrin family. Dimeric disintegrin subfamily. In terms of assembly, heterodimer with piscivostatin-beta; disulfide-linked. As to expression, expressed by the venom gland.

It localises to the secreted. In terms of biological role, inhibits fibrinogen interaction with platelets. Acts by binding to alpha-IIb/beta-3 (ITGA2B/ITGB3) on the platelet surface and inhibits both ADP-induced platelet aggregation and platelet aggregate dissociation in human platelet-rich plasma. The sequence is that of Disintegrin piscivostatin-alpha from Agkistrodon piscivorus piscivorus (Eastern cottonmouth).